A 623-amino-acid polypeptide reads, in one-letter code: Transketolase (623 aa).

Met1 is modified (N-acetylmethionine). 2 positions are modified to N6-acetyllysine: Lys6 and Lys11. His37 contributes to the substrate binding site. The thiamine diphosphate site is built by Ser40 and His77. Position 104 is a phosphoserine (Ser104). Gly123 to Leu125 is a binding site for thiamine diphosphate. Lys144 carries the post-translational modification N6-acetyllysine. Position 155 (Asp155) interacts with Mg(2+). Thiamine diphosphate contacts are provided by Gly156 and Asn185. Residues Asn185 and Leu187 each contribute to the Mg(2+) site. N6-acetyllysine occurs at positions 204, 232, and 241. Thiamine diphosphate-binding residues include Lys244 and His258. His258 serves as a coordination point for substrate. Lys260 is subject to N6-acetyllysine. Tyr275 carries the phosphotyrosine modification. Thr287 carries the post-translational modification Phosphothreonine. Ser295 carries the post-translational modification Phosphoserine. Arg318 lines the substrate pocket. Residue Lys352 forms a Glycyl lysine isopeptide (Lys-Gly) (interchain with G-Cter in SUMO2) linkage. The active-site Proton donor is the Glu366. Phe392 provides a ligand contact to thiamine diphosphate. Substrate-binding residues include His416 and Asp424. Position 428 (Gln428) interacts with thiamine diphosphate. Substrate is bound at residue Arg474. N6-acetyllysine is present on residues Lys538 and Lys603.

This sequence belongs to the transketolase family. In terms of assembly, homodimer. Mg(2+) serves as cofactor. The cofactor is Ca(2+). Requires Mn(2+) as cofactor. It depends on Co(2+) as a cofactor. Thiamine diphosphate is required as a cofactor.

The catalysed reaction is D-sedoheptulose 7-phosphate + D-glyceraldehyde 3-phosphate = aldehydo-D-ribose 5-phosphate + D-xylulose 5-phosphate. Functionally, catalyzes the transfer of a two-carbon ketol group from a ketose donor to an aldose acceptor, via a covalent intermediate with the cofactor thiamine pyrophosphate. This chain is Transketolase (TKT), found in Pongo abelii (Sumatran orangutan).